We begin with the raw amino-acid sequence, 625 residues long: 1-deoxy-D-xylulose-5-phosphate synthase (625 aa).

Residues H80 and 121–123 (GHS) contribute to the thiamine diphosphate site. Residue D152 participates in Mg(2+) binding. Residues 153-154 (GA), N181, Y288, and E370 contribute to the thiamine diphosphate site. N181 is a binding site for Mg(2+).

Belongs to the transketolase family. DXPS subfamily. As to quaternary structure, homodimer. Mg(2+) serves as cofactor. Thiamine diphosphate is required as a cofactor.

The enzyme catalyses D-glyceraldehyde 3-phosphate + pyruvate + H(+) = 1-deoxy-D-xylulose 5-phosphate + CO2. It participates in metabolic intermediate biosynthesis; 1-deoxy-D-xylulose 5-phosphate biosynthesis; 1-deoxy-D-xylulose 5-phosphate from D-glyceraldehyde 3-phosphate and pyruvate: step 1/1. In terms of biological role, catalyzes the acyloin condensation reaction between C atoms 2 and 3 of pyruvate and glyceraldehyde 3-phosphate to yield 1-deoxy-D-xylulose-5-phosphate (DXP). The protein is 1-deoxy-D-xylulose-5-phosphate synthase of Alteromonas mediterranea (strain DSM 17117 / CIP 110805 / LMG 28347 / Deep ecotype).